A 288-amino-acid polypeptide reads, in one-letter code: Store-operated calcium entry regulator STIMATE (288 aa).

The Cytoplasmic portion of the chain corresponds to 1 to 28; that stretch reads MQGPGGNVSRGLPGGPASTVASGAGRCE. 3 consecutive transmembrane segments (helical) span residues 29-49, 69-89, and 102-122; these read SGAL…VVAF, IWFL…FANV, and LYLI…YVGV. The GXXXG motif motif lies at 149–153; the sequence is GAWVG. The next 2 membrane-spanning stretches (helical) occupy residues 156 to 176 and 194 to 214; these read ALYI…LLIL and LAIV…WVVD. Residues 215-288 are Cytoplasmic-facing; sequence NFLMRKGKTK…KKKHRFGLPV (74 aa). The interval 228–288 is disordered; the sequence is EERGANQDSR…KKKHRFGLPV (61 aa). Residues 241–246 are required for localization in the endoplasmic reticulum; the sequence is KVRYRR. Over residues 261 to 272 the composition is skewed to acidic residues; that stretch reads ADDEMEESDAEE. Over residues 277–288 the composition is skewed to basic residues; sequence PVKKKHRFGLPV.

It belongs to the STIMATE family. In terms of assembly, homooligomer. Interacts with STIM1.

The protein resides in the endoplasmic reticulum membrane. In terms of biological role, acts as a regulator of store-operated Ca(2+) entry (SOCE) at junctional sites that connect the endoplasmic reticulum (ER) and plasma membrane (PM), called ER-plasma membrane (ER-PM) junction or cortical ER. SOCE is a Ca(2+) influx following depletion of intracellular Ca(2+) stores. Acts by interacting with STIM1, promoting STIM1 conformational switch. Involved in STIM1 relocalization to ER-PM junctions. Contributes to the maintenance and reorganization of store-dependent ER-PM junctions. This is Store-operated calcium entry regulator STIMATE from Rattus norvegicus (Rat).